We begin with the raw amino-acid sequence, 158 residues long: Phosphopantetheine adenylyltransferase (158 aa).

Threonine 10 contributes to the substrate binding site. ATP contacts are provided by residues 10–11 and histidine 18; that span reads TF. Substrate is bound by residues lysine 42, leucine 74, and arginine 88. Residues 89–91, glutamate 99, and 124–130 contribute to the ATP site; these read GLR and NSFISST.

It belongs to the bacterial CoaD family. In terms of assembly, homohexamer. The cofactor is Mg(2+).

The protein localises to the cytoplasm. The catalysed reaction is (R)-4'-phosphopantetheine + ATP + H(+) = 3'-dephospho-CoA + diphosphate. It participates in cofactor biosynthesis; coenzyme A biosynthesis; CoA from (R)-pantothenate: step 4/5. Functionally, reversibly transfers an adenylyl group from ATP to 4'-phosphopantetheine, yielding dephospho-CoA (dPCoA) and pyrophosphate. This Shewanella woodyi (strain ATCC 51908 / MS32) protein is Phosphopantetheine adenylyltransferase.